The sequence spans 510 residues: MTKRALISVSDKTGVVEFARSLTARGWEVLSTGGTFQALQEAGVSVTQVSDVTGFPEMLDGRVKTLHPAVHGGILARREPQHLSQLEAQGFGTIDLVCVNLYPFRETVARGAPDPEVIENIDIGGPAMIRSAAKNHSGVLVLVDPADYPVALQDEVSGSERRRLAAKAYRHTSEYDAAITAYLEGASEELPTRLPERLTVDLHRVAQVRYGENPHQPGAVYRWGQARGPVMDAQVVAGKPMSFNNYADADAAWSLCQELAAQEDGAVCVAVKHANPCGVAVADDVRAAWERARDADTLSVFGGVVAVSRPVDFQAAQAMRGTFLEVLIAPEVTPDAVEWFAEKKPDLRVLVAAQASGVSVLDVRPLTGGFAVQERDTRPWDDLCPEVVTARQPTDQEWADLRFAWATVKHARSNAVVLARGGVTVGLGAGAVSRIWAAERAVANAGDKAQGAVLASEAFFPFDDVVRLAAQSGVTAILQPGGAKRDPEVIAAANELGVSMVFTGSRHFRH.

Positions 1 to 143 (MTKRALISVS…KNHSGVLVLV (143 aa)) constitute an MGS-like domain.

Belongs to the PurH family.

The catalysed reaction is (6R)-10-formyltetrahydrofolate + 5-amino-1-(5-phospho-beta-D-ribosyl)imidazole-4-carboxamide = 5-formamido-1-(5-phospho-D-ribosyl)imidazole-4-carboxamide + (6S)-5,6,7,8-tetrahydrofolate. It catalyses the reaction IMP + H2O = 5-formamido-1-(5-phospho-D-ribosyl)imidazole-4-carboxamide. The protein operates within purine metabolism; IMP biosynthesis via de novo pathway; 5-formamido-1-(5-phospho-D-ribosyl)imidazole-4-carboxamide from 5-amino-1-(5-phospho-D-ribosyl)imidazole-4-carboxamide (10-formyl THF route): step 1/1. It functions in the pathway purine metabolism; IMP biosynthesis via de novo pathway; IMP from 5-formamido-1-(5-phospho-D-ribosyl)imidazole-4-carboxamide: step 1/1. The sequence is that of Bifunctional purine biosynthesis protein PurH from Deinococcus deserti (strain DSM 17065 / CIP 109153 / LMG 22923 / VCD115).